A 699-amino-acid polypeptide reads, in one-letter code: Elongation factor G (699 aa).

One can recognise a tr-type G domain in the interval 8 to 283 (EHIRNIGICA…AVVYFLPSPI (276 aa)). GTP-binding positions include 17-24 (AHIDAGKT), 81-85 (DTPGH), and 135-138 (NKMD).

Belongs to the TRAFAC class translation factor GTPase superfamily. Classic translation factor GTPase family. EF-G/EF-2 subfamily.

The protein localises to the cytoplasm. Its function is as follows. Catalyzes the GTP-dependent ribosomal translocation step during translation elongation. During this step, the ribosome changes from the pre-translocational (PRE) to the post-translocational (POST) state as the newly formed A-site-bound peptidyl-tRNA and P-site-bound deacylated tRNA move to the P and E sites, respectively. Catalyzes the coordinated movement of the two tRNA molecules, the mRNA and conformational changes in the ribosome. The sequence is that of Elongation factor G from Rickettsia akari (strain Hartford).